A 644-amino-acid chain; its full sequence is Subversion of eukaryotic traffic protein A (644 aa).

Residues 1–400 are glucosyltransferase; sequence MYKIYSYLGW…FHTLLSQVSD (400 aa). Positions 401–644 are ptdIns(3)P-binding and localization domain; it reads PVNPTAHELK…EYDNNHGLRI (244 aa).

Ubiquitinated and polyubiquitinated when ectopically produced in both yeast and mammalian cells; however it is unsure if this modification occurs during the L.pneumophila infection of host cells.

It localises to the secreted. Functionally, secreted effector that interferes with vesicular trafficking of host cells. Possesses glucohydrolase and mono-O-glucosyltransferase activity by using UDP-glucose as a sugar donor substrate. Is able to glucosylate histones H4 and H3.1 in vitro, but it is unlikely that histones are the natural substrates for SetA. May glycosylate a component of the host cell vesicle trafficking machinery during L.pneumophila infection. Binds with high specificity to phosphatidylinositol 3-phosphate (PtdIns(3)P), (with a dissociation constant value of 809 nM), which guides SetA to the cytosolic leaflet of the early phagosome of the host cell. The sequence is that of Subversion of eukaryotic traffic protein A (setA) from Legionella pneumophila subsp. pneumophila (strain Philadelphia 1 / ATCC 33152 / DSM 7513).